Reading from the N-terminus, the 60-residue chain is Mating pheromone En-2 (60 aa).

4 cysteine pairs are disulfide-bonded: Cys11/Cys39, Cys24/Cys35, Cys31/Cys57, and Cys36/Cys48.

It localises to the secreted. Its function is as follows. Mating ciliate pheromones (or gamones) are diffusible extracellular communication signals that distinguish different intraspecific classes of cells commonly referred to as 'mating types'. They prepare the latter for conjugation by changing their cell surface properties. The chain is Mating pheromone En-2 from Euplotes nobilii (Ciliate).